The sequence spans 252 residues: Hydroxyacylglutathione hydrolase (252 aa).

Zn(2+) is bound by residues histidine 54, histidine 56, aspartate 58, histidine 59, histidine 111, aspartate 130, and histidine 170.

This sequence belongs to the metallo-beta-lactamase superfamily. Glyoxalase II family. As to quaternary structure, monomer. Zn(2+) is required as a cofactor.

It carries out the reaction an S-(2-hydroxyacyl)glutathione + H2O = a 2-hydroxy carboxylate + glutathione + H(+). The protein operates within secondary metabolite metabolism; methylglyoxal degradation; (R)-lactate from methylglyoxal: step 2/2. Functionally, thiolesterase that catalyzes the hydrolysis of S-D-lactoyl-glutathione to form glutathione and D-lactic acid. This chain is Hydroxyacylglutathione hydrolase, found in Francisella philomiragia subsp. philomiragia (strain ATCC 25017 / CCUG 19701 / FSC 153 / O#319-036).